The following is a 428-amino-acid chain: C4-dicarboxylate transport protein (428 aa).

8 helical membrane passes run 8-28 (VLYV…HYYP), 44-64 (LIKM…IAGM), 78-98 (LLYF…ATHI), 148-168 (GEIL…AHLG), 184-204 (VLFG…FGAM), 222-242 (LIGT…GAIA), 307-327 (IYMT…LTWM), and 355-375 (AATL…ILGI).

Belongs to the dicarboxylate/amino acid:cation symporter (DAACS) (TC 2.A.23) family.

The protein localises to the cell inner membrane. In terms of biological role, responsible for the transport of dicarboxylates such as succinate, fumarate, and malate from the periplasm across the membrane. This Burkholderia mallei (strain ATCC 23344) protein is C4-dicarboxylate transport protein.